Consider the following 1028-residue polypeptide: Collagen alpha-1(VI) chain (1028 aa).

The first 19 residues, 1-19 (MRAARALLPLLLQACWTAA), serve as a signal peptide directing secretion. The segment at 20-256 (QDEPETPRAV…CCSFECQPAR (237 aa)) is N-terminal globular domain. In terms of domain architecture, VWFA 1 spans 37–235 (DLFFVLDTSE…EAISQTIDTI (199 aa)). Asparagine 212 carries an N-linked (GlcNAc...) asparagine glycan. Residues 254-590 (PARGPPGLRG…GPPGHQGPPG (337 aa)) are disordered. The segment at 257–592 (GPPGLRGDPG…PGHQGPPGPD (336 aa)) is triple-helical region. The short motif at 262-264 (RGD) is the Cell attachment site element. 2 stretches are compositionally biased toward basic and acidic residues: residues 268–285 (EGERGKPGLPGEKGEAGD) and 301–334 (KGEKGSRGEKGSRGPKGYKGEKGKRGIDGVDGVK). A compositionally biased stretch (low complexity) spans 384 to 394 (RPGSSGPSGDE). The Cell attachment site motif lies at 442-444 (RGD). Low complexity predominate over residues 457–471 (EGPVGVPGDPGEAGP). A Cell attachment site motif is present at residues 478 to 480 (RGD). Residues 483-493 (PPGSEGARGAP) show a composition bias toward low complexity. N-linked (GlcNAc...) asparagine glycosylation is found at asparagine 516 and asparagine 537. Over residues 550-560 (GEAGDPGDDNN) the composition is skewed to acidic residues. Over residues 579 to 590 (PQGPPGHQGPPG) the composition is skewed to pro residues. The interval 593-1028 (ECEILDIIMK…QTVSRKVALG (436 aa)) is C-terminal globular domain. VWFA domains lie at 615–805 (DLLF…LKNV) and 829–1021 (DITI…HQTV). 2 N-linked (GlcNAc...) asparagine glycosylation sites follow: asparagine 804 and asparagine 896.

It belongs to the type VI collagen family. As to quaternary structure, trimers composed of three different chains: alpha-1(VI), alpha-2(VI), and alpha-3(VI) or alpha-5(VI) or alpha-6(VI). In terms of processing, prolines at the third position of the tripeptide repeating unit (G-X-Y) are hydroxylated in some or all of the chains.

Its subcellular location is the secreted. It localises to the extracellular space. It is found in the extracellular matrix. Its function is as follows. Collagen VI acts as a cell-binding protein. The chain is Collagen alpha-1(VI) chain (COL6A1) from Homo sapiens (Human).